We begin with the raw amino-acid sequence, 323 residues long: Probable cell division protein WhiA (323 aa).

Residues 275–309 constitute a DNA-binding region (H-T-H motif); the sequence is TLKELGEMLTTGQVSKSGINHRLRKLDQIAERLRS.

Belongs to the WhiA family.

In terms of biological role, involved in cell division and chromosome segregation. The protein is Probable cell division protein WhiA of Listeria monocytogenes serotype 4a (strain HCC23).